Reading from the N-terminus, the 200-residue chain is Recombination protein RecR (200 aa).

Residues 58-73 (CSVCGNLTDTDPCFIC) form a C4-type zinc finger. Residues 81–176 (DLLCVVERPR…SVTRIAHGLP (96 aa)) form the Toprim domain.

It belongs to the RecR family.

Functionally, may play a role in DNA repair. It seems to be involved in an RecBC-independent recombinational process of DNA repair. It may act with RecF and RecO. The protein is Recombination protein RecR of Pelotomaculum thermopropionicum (strain DSM 13744 / JCM 10971 / SI).